Consider the following 282-residue polypeptide: E3 ubiquitin-protein ligase SIAH1 (282 aa).

The segment covering 1–17 has biased composition (polar residues); it reads MSRQTATALPTGTSKCP. The interval 1-22 is disordered; that stretch reads MSRQTATALPTGTSKCPPSQRV. Ser19 is modified (phosphoserine; by ATM and ATR). The segment at 41–76 adopts an RING-type zinc-finger fold; sequence CPVCFDYVLPPILQCQSGHLVCSNCRPKLTCCPTCR. The tract at residues 90–282 is SBD; it reads VANSVLFPCK…LGINVTISMC (193 aa). The segment at 93–153 adopts an SIAH-type zinc-finger fold; the sequence is SVLFPCKYAS…VMPHLMHQHK (61 aa). Zn(2+) contacts are provided by Cys98, Cys105, His117, Cys121, Cys128, Cys135, His147, and His152.

It belongs to the SINA (Seven in absentia) family. In terms of assembly, homodimer. Component of some large E3 complex composed of UBE2D1, SIAH1, CACYBP/SIP, SKP1, APC and TBL1X. Interacts with UBE2I. Interacts with alpha-tubulin. Interacts with PEG10, which may inhibit its activity. Interacts with PEG3 and HIPK2. Interacts with group 1 glutamate receptors GRM1 and GRM5. Interacts with DAB1, which may inhibit its activity. Interacts with UBE2E2. Interacts with SNCAIP. Interacts with HIPK2; the interaction is promoted by DAZAP2 and results in SIAH1-mediated ubiquitination and subsequent proteasomal degradation of HIPK2. Interacts with DAZAP2; the interaction is decreased following phosphorylation of DAZAP2 by HIPK2. Interacts with GAPDH; leading to stabilize SIAH1. Interacts with Bassoon/BSN and Piccolo/PLCO; these interactions negatively regulate SIAH1 E3 ligase activity. Interacts with DCC. Interacts with AXIN1; catalyzes AXIN1 ubiquitination and subsequent proteasome-mediated ubiquitin-dependent degradation. In terms of processing, phosphorylated on Ser-19 by ATM and ATR. This phosphorylation disrupts SIAH1 interaction with HIPK2, and subsequent proteasomal degradation of HIPK2.

The protein localises to the cytoplasm. It localises to the nucleus. It catalyses the reaction S-ubiquitinyl-[E2 ubiquitin-conjugating enzyme]-L-cysteine + [acceptor protein]-L-lysine = [E2 ubiquitin-conjugating enzyme]-L-cysteine + N(6)-ubiquitinyl-[acceptor protein]-L-lysine.. It participates in protein modification; protein ubiquitination. In terms of biological role, E3 ubiquitin-protein ligase that mediates ubiquitination and subsequent proteasomal degradation of target proteins. E3 ubiquitin ligases accept ubiquitin from an E2 ubiquitin-conjugating enzyme in the form of a thioester and then directly transfers the ubiquitin to targeted substrates. Mediates E3 ubiquitin ligase activity either through direct binding to substrates or by functioning as the essential RING domain subunit of larger E3 complexes. Triggers the ubiquitin-mediated degradation of many substrates, including proteins involved in transcription regulation (ELL2, MYB, POU2AF1, PML and RBBP8), a cell surface receptor (DCC), cytoplasmic signal transduction molecules (KLF10/TIEG1 and NUMB), an antiapoptotic protein (BAG1), a microtubule motor protein (KIF22), a protein involved in synaptic vesicle function in neurons (SYP), a structural protein (CTNNB1) and SNCAIP. Confers constitutive instability to HIPK2 through proteasomal degradation. It is thereby involved in many cellular processes such as apoptosis, tumor suppression, cell cycle, axon guidance, transcription, spermatogenesis and TNF-alpha signaling. Has some overlapping function with SIAH2. Induces apoptosis in cooperation with PEG3. Upon nitric oxid (NO) generation that follows apoptotic stimulation, interacts with S-nitrosylated GAPDH, mediating the translocation of GAPDH to the nucleus. GAPDH acts as a stabilizer of SIAH1, facilitating the degradation of nuclear proteins. Mediates ubiquitination and degradation of EGLN2 and EGLN3 in response to the unfolded protein response (UPR), leading to their degradation and subsequent stabilization of ATF4. Also part of the Wnt signaling pathway in which it mediates the Wnt-induced ubiquitin-mediated proteasomal degradation of AXIN1. The protein is E3 ubiquitin-protein ligase SIAH1 (Siah1) of Rattus norvegicus (Rat).